Here is a 151-residue protein sequence, read N- to C-terminus: Ribonuclease H (151 aa).

In terms of domain architecture, RNase H type-1 spans 1–141; it reads MKHVDIFTDG…ADELARRGME (141 aa). Aspartate 9, glutamate 47, aspartate 69, and aspartate 133 together coordinate Mg(2+).

This sequence belongs to the RNase H family. In terms of assembly, monomer. The cofactor is Mg(2+).

The protein resides in the cytoplasm. It catalyses the reaction Endonucleolytic cleavage to 5'-phosphomonoester.. Functionally, endonuclease that specifically degrades the RNA of RNA-DNA hybrids. This Rhizobium etli (strain ATCC 51251 / DSM 11541 / JCM 21823 / NBRC 15573 / CFN 42) protein is Ribonuclease H.